The primary structure comprises 304 residues: RNA polymerase II holoenzyme cyclin-like subunit (304 aa).

Residues 43 to 174 form the Cyclin N-terminal domain; sequence TIHDSKANKQ…LIEELQSYLI (132 aa).

It belongs to the cyclin family. Cyclin C subfamily. As to quaternary structure, component of the SRB8-11 complex, a regulatory module of the Mediator complex.

It is found in the nucleus. Functionally, component of the SRB8-11 complex. The SRB8-11 complex is a regulatory module of the Mediator complex which is itself involved in regulation of basal and activated RNA polymerase II-dependent transcription. The SRB8-11 complex may be involved in the transcriptional repression of a subset of genes regulated by Mediator. It may inhibit the association of the Mediator complex with RNA polymerase II to form the holoenzyme complex. The SRB8-11 complex phosphorylates the C-terminal domain (CTD) of the largest subunit of RNA polymerase II. The protein is RNA polymerase II holoenzyme cyclin-like subunit (SSN8) of Kluyveromyces lactis (strain ATCC 8585 / CBS 2359 / DSM 70799 / NBRC 1267 / NRRL Y-1140 / WM37) (Yeast).